The chain runs to 195 residues: Recombination protein RecR (195 aa).

The C4-type zinc finger occupies 53–68 (CPVCFNIDVKSPCSIC). The region spanning 76-171 (QLLCIVEELG…KVTRLACGIP (96 aa)) is the Toprim domain.

This sequence belongs to the RecR family.

In terms of biological role, may play a role in DNA repair. It seems to be involved in an RecBC-independent recombinational process of DNA repair. It may act with RecF and RecO. This is Recombination protein RecR from Ehrlichia chaffeensis (strain ATCC CRL-10679 / Arkansas).